The chain runs to 130 residues: Large ribosomal subunit protein eL32 (130 aa).

The residue at position 40 (Ser40) is a Phosphoserine.

The protein belongs to the eukaryotic ribosomal protein eL32 family. In terms of assembly, component of the large ribosomal subunit (LSU). Mature yeast ribosomes consist of a small (40S) and a large (60S) subunit. The 40S small subunit contains 1 molecule of ribosomal RNA (18S rRNA) and 33 different proteins (encoded by 57 genes). The large 60S subunit contains 3 rRNA molecules (25S, 5.8S and 5S rRNA) and 46 different proteins (encoded by 81 genes).

It localises to the cytoplasm. Its function is as follows. Component of the ribosome, a large ribonucleoprotein complex responsible for the synthesis of proteins in the cell. The small ribosomal subunit (SSU) binds messenger RNAs (mRNAs) and translates the encoded message by selecting cognate aminoacyl-transfer RNA (tRNA) molecules. The large subunit (LSU) contains the ribosomal catalytic site termed the peptidyl transferase center (PTC), which catalyzes the formation of peptide bonds, thereby polymerizing the amino acids delivered by tRNAs into a polypeptide chain. The nascent polypeptides leave the ribosome through a tunnel in the LSU and interact with protein factors that function in enzymatic processing, targeting, and the membrane insertion of nascent chains at the exit of the ribosomal tunnel. The polypeptide is Large ribosomal subunit protein eL32 (Saccharomyces cerevisiae (strain ATCC 204508 / S288c) (Baker's yeast)).